The following is a 180-amino-acid chain: Pro-glucagon (180 aa).

The first 20 residues, 1 to 20, serve as a signal peptide directing secretion; the sequence is MKSIYFVAGLFVMLVQGSWQ. The segment at 23–56 is disordered; the sequence is LQDTEEKPRSFSTSQTDLLDDPDQMNEDKRHSQG. Ser-54 bears the Phosphoserine mark. A propeptide spanning residues 84-89 is cleaved from the precursor; that stretch reads NRNEIA. A phosphoserine mark is found at Ser-105 and Ser-108. Arg-127 carries the post-translational modification Arginine amide. Positions 131-145 are excised as a propeptide; it reads DFPEEVTIVEELRRR. Ser-150 and Ser-152 each carry phosphoserine.

The protein belongs to the glucagon family. In terms of processing, proglucagon is post-translationally processed in a tissue-specific manner in pancreatic A cells and intestinal L cells. In pancreatic A cells, the major bioactive hormone is glucagon cleaved by PCSK2/PC2. In the intestinal L cells PCSK1/PC1 liberates GLP-1, GLP-2, glicentin and oxyntomodulin. GLP-1 is further N-terminally truncated by post-translational processing in the intestinal L cells resulting in GLP-1(7-37) GLP-1-(7-36)amide. The C-terminal amidation is neither important for the metabolism of GLP-1 nor for its effects on the endocrine pancreas. Glucagon is secreted in the A cells of the islets of Langerhans. GLP-1, GLP-2, oxyntomodulin and glicentin are secreted from enteroendocrine cells throughout the gastrointestinal tract. GLP-1 and GLP-2 are also secreted in selected neurons in the brain.

The protein resides in the secreted. In terms of biological role, plays a key role in glucose metabolism and homeostasis. Regulates blood glucose by increasing gluconeogenesis and decreasing glycolysis. A counterregulatory hormone of insulin, raises plasma glucose levels in response to insulin-induced hypoglycemia. Plays an important role in initiating and maintaining hyperglycemic conditions in diabetes. Potent stimulator of glucose-dependent insulin release. Also stimulates insulin release in response to IL6. Plays important roles on gastric motility and the suppression of plasma glucagon levels. May be involved in the suppression of satiety and stimulation of glucose disposal in peripheral tissues, independent of the actions of insulin. Has growth-promoting activities on intestinal epithelium. May also regulate the hypothalamic pituitary axis (HPA) via effects on LH, TSH, CRH, oxytocin, and vasopressin secretion. Increases islet mass through stimulation of islet neogenesis and pancreatic beta cell proliferation. Inhibits beta cell apoptosis. Its function is as follows. Stimulates intestinal growth and up-regulates villus height in the small intestine, concomitant with increased crypt cell proliferation and decreased enterocyte apoptosis. The gastrointestinal tract, from the stomach to the colon is the principal target for GLP-2 action. Plays a key role in nutrient homeostasis, enhancing nutrient assimilation through enhanced gastrointestinal function, as well as increasing nutrient disposal. Stimulates intestinal glucose transport and decreases mucosal permeability. Functionally, significantly reduces food intake. Inhibits gastric emptying in humans. Suppression of gastric emptying may lead to increased gastric distension, which may contribute to satiety by causing a sensation of fullness. In terms of biological role, may modulate gastric acid secretion and the gastro-pyloro-duodenal activity. May play an important role in intestinal mucosal growth in the early period of life. The sequence is that of Pro-glucagon (GCG) from Octodon degus (Degu).